The chain runs to 663 residues: Preterminal protein (663 aa).

A Nuclear localization signal motif is present at residues 367–376 (SLPLPTRRRR). Positions 374-414 (RRRVARPAPPSPSPSPEPVELEMPPLEGEEEEEEEELPPRS) are disordered. A compositionally biased stretch (pro residues) spans 380 to 390 (PAPPSPSPSPE). Acidic residues predominate over residues 400–409 (EGEEEEEEEE). Ser-575 is subject to O-(5'-phospho-DNA)-serine. The segment at 632–663 (QLQPMPELNDPVQLPPLRPERQRPPLGPRRPL) is disordered.

This sequence belongs to the adenoviridae terminal protein family. As to quaternary structure, heterodimer with the polymerase; this heterodimer binds to bp 9 to 18 of the genome. Interacts with host POU2F1; POU2F1 binds to the auxiliary sequences in the inverted terminal repeats and tethers the pTP-POL heterodimer to the origin DNA thereby participating in the assembly of the pre-initiation complex (POL-TP-DBP-NFIA-POU2F1). Post-translationally, preterminal protein is used to replicate viral genome, upon genomic encapsidation it is processed first into iTP and finally into TP by adenovirus protease.

The protein localises to the host nucleus matrix. Its function is as follows. Protein covalently bound to the viral DNA that acts as a primer for viral genomic replication by DNA strand displacement. Assembles on the viral origin of replication in an initiation complex with viral polymerase, DBP, host NFIA and host POU2F1/OCT1. During initiation, the polymerase covalently couples the first dCTP with Ser-580 of pTP. The terminal protein stimulates the template activity over 20 fold compared to protein-free templates. Neo-synthesized viral genomes are linked to two preterminal proteins, one for each 5' end. These new genomes are encapsidated in the nucleus, and during capsid maturation by viral protease, preterminal protein is first cleaved into intermediary (iTP), then into mature TP. May play a role in host nuclear matrix localization of genomic DNA. This Bos taurus (Bovine) protein is Preterminal protein.